A 179-amino-acid polypeptide reads, in one-letter code: Large ribosomal subunit protein uL6 (179 aa).

It belongs to the universal ribosomal protein uL6 family. In terms of assembly, part of the 50S ribosomal subunit.

Its function is as follows. This protein binds to the 23S rRNA, and is important in its secondary structure. It is located near the subunit interface in the base of the L7/L12 stalk, and near the tRNA binding site of the peptidyltransferase center. In Leptospira interrogans serogroup Icterohaemorrhagiae serovar copenhageni (strain Fiocruz L1-130), this protein is Large ribosomal subunit protein uL6.